Reading from the N-terminus, the 198-residue chain is Thymidine kinase (198 aa).

ATP-binding positions include 9 to 16 and 85 to 88; these read GTMNSGKS and DEAQ. Residue glutamate 86 is the Proton acceptor of the active site. Positions 143, 146, 180, and 183 each coordinate Zn(2+).

Belongs to the thymidine kinase family. As to quaternary structure, homotetramer.

The protein localises to the cytoplasm. The enzyme catalyses thymidine + ATP = dTMP + ADP + H(+). The chain is Thymidine kinase from Streptococcus thermophilus (strain ATCC BAA-250 / LMG 18311).